We begin with the raw amino-acid sequence, 786 residues long: Endonuclease MutS2 (786 aa).

335 to 342 is a binding site for ATP; the sequence is GPNTGGKT. In terms of domain architecture, Smr spans 711 to 786; that stretch reads LDLRGERFEN…GLGVTVVELK (76 aa).

This sequence belongs to the DNA mismatch repair MutS family. MutS2 subfamily. In terms of assembly, homodimer. Binds to stalled ribosomes, contacting rRNA.

In terms of biological role, endonuclease that is involved in the suppression of homologous recombination and thus may have a key role in the control of bacterial genetic diversity. Functionally, acts as a ribosome collision sensor, splitting the ribosome into its 2 subunits. Detects stalled/collided 70S ribosomes which it binds and splits by an ATP-hydrolysis driven conformational change. Acts upstream of the ribosome quality control system (RQC), a ribosome-associated complex that mediates the extraction of incompletely synthesized nascent chains from stalled ribosomes and their subsequent degradation. Probably generates substrates for RQC. The polypeptide is Endonuclease MutS2 (Bacillus thuringiensis (strain Al Hakam)).